The primary structure comprises 115 residues: Ribonuclease P protein component (115 aa).

Belongs to the RnpA family. Consists of a catalytic RNA component (M1 or rnpB) and a protein subunit.

The catalysed reaction is Endonucleolytic cleavage of RNA, removing 5'-extranucleotides from tRNA precursor.. In terms of biological role, RNaseP catalyzes the removal of the 5'-leader sequence from pre-tRNA to produce the mature 5'-terminus. It can also cleave other RNA substrates such as 4.5S RNA. The protein component plays an auxiliary but essential role in vivo by binding to the 5'-leader sequence and broadening the substrate specificity of the ribozyme. The chain is Ribonuclease P protein component from Macrococcus caseolyticus (strain JCSC5402) (Macrococcoides caseolyticum).